A 114-amino-acid polypeptide reads, in one-letter code: Nucleoid-associated protein SGR_3378 (114 aa).

It belongs to the YbaB/EbfC family. As to quaternary structure, homodimer.

It is found in the cytoplasm. The protein localises to the nucleoid. In terms of biological role, binds to DNA and alters its conformation. May be involved in regulation of gene expression, nucleoid organization and DNA protection. The polypeptide is Nucleoid-associated protein SGR_3378 (Streptomyces griseus subsp. griseus (strain JCM 4626 / CBS 651.72 / NBRC 13350 / KCC S-0626 / ISP 5235)).